Consider the following 1399-residue polypeptide: DNA-directed RNA polymerase subunit beta' (1399 aa).

The Zn(2+) site is built by Cys-70, Cys-72, Cys-85, and Cys-88. The Mg(2+) site is built by Asp-460, Asp-462, and Asp-464. Zn(2+) contacts are provided by Cys-814, Cys-888, Cys-895, and Cys-898.

The protein belongs to the RNA polymerase beta' chain family. The RNAP catalytic core consists of 2 alpha, 1 beta, 1 beta' and 1 omega subunit. When a sigma factor is associated with the core the holoenzyme is formed, which can initiate transcription. The cofactor is Mg(2+). Zn(2+) is required as a cofactor.

It catalyses the reaction RNA(n) + a ribonucleoside 5'-triphosphate = RNA(n+1) + diphosphate. In terms of biological role, DNA-dependent RNA polymerase catalyzes the transcription of DNA into RNA using the four ribonucleoside triphosphates as substrates. The chain is DNA-directed RNA polymerase subunit beta' from Pseudomonas putida (strain ATCC 700007 / DSM 6899 / JCM 31910 / BCRC 17059 / LMG 24140 / F1).